The following is a 365-amino-acid chain: 3-isopropylmalate dehydrogenase (365 aa).

NAD(+) is bound at residue 80-93 (GPKWADNTGDQRPE). Arg-100, Arg-110, Arg-138, and Asp-223 together coordinate substrate. The Mg(2+) site is built by Asp-223, Asp-247, and Asp-251. 280 to 292 (GSAPDIAGQDVAN) provides a ligand contact to NAD(+). The interval 337 to 365 (NEEDASTSAFGREVATRAADSVPQNAPTP) is disordered.

Belongs to the isocitrate and isopropylmalate dehydrogenases family. LeuB type 1 subfamily. As to quaternary structure, homodimer. Mg(2+) is required as a cofactor. Requires Mn(2+) as cofactor.

Its subcellular location is the cytoplasm. The enzyme catalyses (2R,3S)-3-isopropylmalate + NAD(+) = 4-methyl-2-oxopentanoate + CO2 + NADH. It participates in amino-acid biosynthesis; L-leucine biosynthesis; L-leucine from 3-methyl-2-oxobutanoate: step 3/4. In terms of biological role, catalyzes the oxidation of 3-carboxy-2-hydroxy-4-methylpentanoate (3-isopropylmalate) to 3-carboxy-4-methyl-2-oxopentanoate. The product decarboxylates to 4-methyl-2 oxopentanoate. The polypeptide is 3-isopropylmalate dehydrogenase (Salinibacter ruber (strain DSM 13855 / M31)).